The primary structure comprises 146 residues: MKNEMSLAFASVSENEAFARVAVASFITQLDPTMDELTEIKTVVSEAVTNSIIHGYHNEPHHKVYIECVLQDDEIEITIRDEGVGIKDIDEAREPLYTSKPELERSGMGFTIIENFMDSVEVISAPEKGTSVYMTKQLSKSKTVYN.

The protein belongs to the anti-sigma-factor family.

The catalysed reaction is L-seryl-[protein] + ATP = O-phospho-L-seryl-[protein] + ADP + H(+). It catalyses the reaction L-threonyl-[protein] + ATP = O-phospho-L-threonyl-[protein] + ADP + H(+). In terms of biological role, binds to sigma F and blocks its ability to form an RNA polymerase holoenzyme (E-sigma F). Phosphorylates SpoIIAA on a serine residue. This phosphorylation may enable SpoIIAA to act as an anti-anti-sigma factor that counteracts SpoIIAB and thus releases sigma F from inhibition. The chain is Anti-sigma F factor from Oceanobacillus iheyensis (strain DSM 14371 / CIP 107618 / JCM 11309 / KCTC 3954 / HTE831).